Consider the following 36-residue polypeptide: Photosystem I reaction center subunit VIII (36 aa).

Residues 6-28 form a helical membrane-spanning segment; that stretch reads FPSVLVPLVGLVFPAMAMASLSL.

Belongs to the PsaI family.

Its subcellular location is the plastid. The protein localises to the chloroplast thylakoid membrane. In terms of biological role, may help in the organization of the PsaL subunit. The protein is Photosystem I reaction center subunit VIII of Panax ginseng (Korean ginseng).